The chain runs to 419 residues: Phosphoglycerate kinase (419 aa).

Substrate contacts are provided by residues 42-44 (DLN), R58, 81-84 (HLGR), R135, and R168. Residues K219, E341, and 367–370 (GGDT) contribute to the ATP site.

This sequence belongs to the phosphoglycerate kinase family. Monomer.

It localises to the cytoplasm. The enzyme catalyses (2R)-3-phosphoglycerate + ATP = (2R)-3-phospho-glyceroyl phosphate + ADP. Its pathway is carbohydrate degradation; glycolysis; pyruvate from D-glyceraldehyde 3-phosphate: step 2/5. This is Phosphoglycerate kinase from Ralstonia nicotianae (strain ATCC BAA-1114 / GMI1000) (Ralstonia solanacearum).